The following is a 235-amino-acid chain: Transcription factor hepR (235 aa).

A disordered region spans residues 14–45 (QNSPESSRDVLSMASPGLLPIDPSPEHDETNK). A C2H2-type zinc finger spans residues 175 to 205 (IQCPCLDERGERCSRMFSRLDNMRDHVRRIH).

The protein resides in the nucleus. Its function is as follows. Transcription factor; part of the gene cluster that mediates the biosynthesis of heptelidic acid (HA), a sesquiterpene lactone that acts as an inhibitor of glyceraldehyde-3-phosphatedehydrogenase (GAPDH) and a growth inhibitor of the salt-tolerant lactic acid bacteria in soy sauce brewing. Both hepR and hepS regulate the transcription of the heptelidic acid cluster, but they are not involved in mutual transcriptional regulation and act with different mechanisms. The sequence is that of Transcription factor hepR from Aspergillus oryzae (strain ATCC 42149 / RIB 40) (Yellow koji mold).